The following is a 409-amino-acid chain: LIM/homeobox protein ttx-3 (409 aa).

LIM zinc-binding domains lie at 108–169 and 171–232; these read NQCC…RYQK and CRKC…VRST. 2 disordered regions span residues 245 to 299 and 372 to 409; these read AVVA…RTSF and MNPPLSSSSSGHSTDGYQLNTPPLSSEIYSPNSNYTHL. The span at 247 to 267 shows a compositional bias: pro residues; that stretch reads VAPPPPPPTTTTAPPPAAPEQ. Positions 292–351 form a DNA-binding region, homeobox; that stretch reads SKRMRTSFKHHQLRAMKTYFALNHNPDAKDLKQLAAKTNLTKRVLQVWFQNARAKYRREL. Polar residues predominate over residues 382 to 409; sequence GHSTDGYQLNTPPLSSEIYSPNSNYTHL.

Expressed in the AIA, AIN and AIY interneurons, and in the NSM neurons. Expressed also in ADL and ASI sensory neurons in 60-70% of L2 larvae. Expression is also detected in head muscles of embryos and some early larvae but not late larvae or adults.

It localises to the nucleus. It is found in the perikaryon. Its subcellular location is the cell projection. The protein localises to the axon. Functionally, transcription factor. Binds to a sequence motif, 5'-TTATTGGCTTCGTTAA-3', which may be involved in AIY interneuron function, in the regulatory elements of target genes; binding is more efficient, in vitro, together with homeobox protein ceh-10. Required for specification of the AIA and AIY interneurons and the NSM neurons. Positively regulates the expression of a number of genes including ceh-10, ceh-23, kal-1, hen-1, ser-2, unc-17 and sra-11 in AIY neurons, and cat-4, flp-4, bas-1, ptps-1 and mgl-1 in NSM neurons. In concert with WNT/beta-catenin signaling, initiates expression of homeobox ceh-10 in AIY, but not in the sister cells, SMDD motor neurons. Also acts in an autoregulatory feedback loop to maintain its own expression. Plays a role in the thermotactic response, olfactory imprinting, regulation of longevity, control of dauer formation and axon outgrowth and pathfinding. Not required for normal chemosensory behavior. In Caenorhabditis elegans, this protein is LIM/homeobox protein ttx-3.